Reading from the N-terminus, the 64-residue chain is Large ribosomal subunit protein bL28 (64 aa).

Positions 1–23 (MSKECYFTGRKTVSSNNRSHAMN) are disordered. Polar residues predominate over residues 11-23 (KTVSSNNRSHAMN).

Belongs to the bacterial ribosomal protein bL28 family.

In Lactococcus lactis subsp. cremoris (strain SK11), this protein is Large ribosomal subunit protein bL28.